We begin with the raw amino-acid sequence, 85 residues long: Probable [Fe-S]-dependent transcriptional repressor (85 aa).

Iron-sulfur cluster contacts are provided by Cys-56, Cys-61, Cys-64, and Cys-71.

Belongs to the FeoC family.

In terms of biological role, may function as a transcriptional regulator that controls feoABC expression. The protein is Probable [Fe-S]-dependent transcriptional repressor of Yersinia pseudotuberculosis serotype O:1b (strain IP 31758).